The chain runs to 364 residues: Spermidine/putrescine import ATP-binding protein PotA (364 aa).

Positions 5–235 constitute an ABC transporter domain; sequence LSFKDVSKGF…PVNRFVADFI (231 aa). 37 to 44 provides a ligand contact to ATP; sequence GPSGCGKT.

Belongs to the ABC transporter superfamily. Spermidine/putrescine importer (TC 3.A.1.11.1) family. The complex is composed of two ATP-binding proteins (PotA), two transmembrane proteins (PotB and PotC) and a solute-binding protein (PotD).

The protein localises to the cell membrane. It catalyses the reaction ATP + H2O + polyamine-[polyamine-binding protein]Side 1 = ADP + phosphate + polyamineSide 2 + [polyamine-binding protein]Side 1.. Part of the ABC transporter complex PotABCD involved in spermidine/putrescine import. Responsible for energy coupling to the transport system. The polypeptide is Spermidine/putrescine import ATP-binding protein PotA (Staphylococcus epidermidis (strain ATCC 12228 / FDA PCI 1200)).